Consider the following 104-residue polypeptide: Phosphoribosyl-ATP pyrophosphatase (104 aa).

This sequence belongs to the PRA-PH family.

The protein localises to the cytoplasm. It catalyses the reaction 1-(5-phospho-beta-D-ribosyl)-ATP + H2O = 1-(5-phospho-beta-D-ribosyl)-5'-AMP + diphosphate + H(+). It functions in the pathway amino-acid biosynthesis; L-histidine biosynthesis; L-histidine from 5-phospho-alpha-D-ribose 1-diphosphate: step 2/9. In Nitrosococcus oceani (strain ATCC 19707 / BCRC 17464 / JCM 30415 / NCIMB 11848 / C-107), this protein is Phosphoribosyl-ATP pyrophosphatase.